The following is a 240-amino-acid chain: Ribonuclease P protein component (240 aa).

The segment at 1–140 (MDEKDLATQQ…KKAGGKGLVS (140 aa)) is disordered. Residues 40 to 51 (APPPHRVIPPHP) are compositionally biased toward pro residues. Residues 47–123 (IPPHPGLRQD…PGPDRDGGSK (77 aa)) are insert. The span at 122–132 (SKASRASSPKK) shows a compositional bias: low complexity.

Belongs to the RnpA family. As to quaternary structure, consists of a catalytic RNA component (M1 or rnpB) and a protein subunit.

It catalyses the reaction Endonucleolytic cleavage of RNA, removing 5'-extranucleotides from tRNA precursor.. Functionally, RNaseP catalyzes the removal of the 5'-leader sequence from pre-tRNA to produce the mature 5'-terminus. It can also cleave other RNA substrates such as 4.5S RNA. The protein component plays an auxiliary but essential role in vivo by binding to the 5'-leader sequence and broadening the substrate specificity of the ribozyme. The protein is Ribonuclease P protein component of Thermus filiformis.